The following is a 72-amino-acid chain: Protein CYSTEINE-RICH TRANSMEMBRANE MODULE 1 (72 aa).

Polar residues predominate over residues 1–11; the sequence is MSQYDHNQSAG. A disordered region spans residues 1-46; sequence MSQYDHNQSAGANPPPPMSTCTSPPPPIGYPTNQPSHGSVAQGKVE. Positions 13–29 are enriched in pro residues; it reads NPPPPMSTCTSPPPPIG. Residues 49–65 form a helical membrane-spanning segment; sequence SKGDGFFKGCLAAMCCC.

This sequence belongs to the CYSTM1 family. As to quaternary structure, heterodimers. Binds weakly to CYSTM7 and WIH1/CYSTM13. Mostly expressed in roots, flowers and siliques and, to a lower extent, in stems and leaves.

It localises to the cell membrane. The protein localises to the nucleus. Its function is as follows. May be involved in aluminium (Al) tolerance. Involved in resistance to abiotic stress. The sequence is that of Protein CYSTEINE-RICH TRANSMEMBRANE MODULE 1 from Arabidopsis thaliana (Mouse-ear cress).